Here is a 270-residue protein sequence, read N- to C-terminus: Diaminopimelate epimerase (270 aa).

Asn-15, Gln-49, and Asn-66 together coordinate substrate. The Proton donor role is filled by Cys-75. Substrate-binding positions include 76-77, Asn-155, Asn-187, and 204-205; these read GN and ER. Cys-213 acts as the Proton acceptor in catalysis. Substrate is bound at residue 214-215; the sequence is GS.

This sequence belongs to the diaminopimelate epimerase family. In terms of assembly, homodimer.

Its subcellular location is the cytoplasm. The catalysed reaction is (2S,6S)-2,6-diaminopimelate = meso-2,6-diaminopimelate. Its pathway is amino-acid biosynthesis; L-lysine biosynthesis via DAP pathway; DL-2,6-diaminopimelate from LL-2,6-diaminopimelate: step 1/1. Its function is as follows. Catalyzes the stereoinversion of LL-2,6-diaminopimelate (L,L-DAP) to meso-diaminopimelate (meso-DAP), a precursor of L-lysine and an essential component of the bacterial peptidoglycan. This is Diaminopimelate epimerase from Rickettsia typhi (strain ATCC VR-144 / Wilmington).